Reading from the N-terminus, the 173-residue chain is CKLF-like MARVEL transmembrane domain-containing protein 8 (173 aa).

The MARVEL domain maps to 36 to 168; it reads FLRTLPGLLI…NTYFSFIAWR (133 aa). A run of 4 helical transmembrane segments spans residues 40–60, 70–90, 105–125, and 147–167; these read LPGL…TLIA, FGWV…FLII, TTVG…AAIV, and FFAF…FIAW.

This sequence belongs to the chemokine-like factor family.

The protein localises to the membrane. The chain is CKLF-like MARVEL transmembrane domain-containing protein 8 (CMTM8) from Bos taurus (Bovine).